We begin with the raw amino-acid sequence, 847 residues long: Putative disease resistance RPP13-like protein 2 (847 aa).

Positions 26 to 42 (GVKDDLEELKTELTCIQ) form a coiled coil. Positions 142 to 446 (STSRVREVRR…AEGFIQEDEE (305 aa)) constitute an NB-ARC domain. Residue 191 to 198 (GMEGLGKT) participates in ATP binding. LRR repeat units lie at residues 587–610 (LVHLRYLGIADTVVNNLPDFISNL), 612–634 (FLQTLDASGNSFERMTDLSNLTS), 703–726 (LKNLRVLKIEVVSFSLFSEETVRF), 749–774 (FPSLESLTLVTNLQEDPMPTLQKLQR), and 807–830 (IKRLDELEIEEEAMPCLMKLNLDN).

This sequence belongs to the disease resistance NB-LRR family. RPP13 subfamily.

Functionally, potential disease resistance protein. This Arabidopsis thaliana (Mouse-ear cress) protein is Putative disease resistance RPP13-like protein 2 (RPP13L2).